The primary structure comprises 66 residues: DNA-directed RNA polymerase subunit Rpo10 (66 aa).

4 residues coordinate Zn(2+): Cys7, Cys10, Cys47, and Cys48.

The protein belongs to the archaeal Rpo10/eukaryotic RPB10 RNA polymerase subunit family. In terms of assembly, part of the RNA polymerase complex. Zn(2+) serves as cofactor.

The protein localises to the cytoplasm. The enzyme catalyses RNA(n) + a ribonucleoside 5'-triphosphate = RNA(n+1) + diphosphate. In terms of biological role, DNA-dependent RNA polymerase (RNAP) catalyzes the transcription of DNA into RNA using the four ribonucleoside triphosphates as substrates. The protein is DNA-directed RNA polymerase subunit Rpo10 of Halobacterium salinarum (strain ATCC 29341 / DSM 671 / R1).